The chain runs to 380 residues: Cytochrome b (380 aa).

4 helical membrane passes run 33-53 (FGSL…FLAM), 77-98 (WLIR…YLHV), 113-133 (WNIG…GYVL), and 178-198 (FFAF…IHLL). Residues H83 and H97 each contribute to the heme b site. 2 residues coordinate heme b: H182 and H196. H201 is an a ubiquinone binding site. Helical transmembrane passes span 226-246 (YKDL…ALFS), 288-308 (LGGV…PMLH), 320-340 (LSQI…WIGG), and 347-367 (FVLI…IALP).

Belongs to the cytochrome b family. As to quaternary structure, the cytochrome bc1 complex contains 3 respiratory subunits (MT-CYB, CYC1 and UQCRFS1), 2 core proteins (UQCRC1 and UQCRC2) and probably 6 low-molecular weight proteins. The cofactor is heme b.

It is found in the mitochondrion inner membrane. Functionally, component of the ubiquinol-cytochrome c reductase complex (complex III or cytochrome b-c1 complex) that is part of the mitochondrial respiratory chain. The b-c1 complex mediates electron transfer from ubiquinol to cytochrome c. Contributes to the generation of a proton gradient across the mitochondrial membrane that is then used for ATP synthesis. The sequence is that of Cytochrome b (mt-cyb) from Acipenser transmontanus (White sturgeon).